The primary structure comprises 466 residues: Soluble pyridine nucleotide transhydrogenase (466 aa).

An FAD-binding site is contributed by 36–45 (ERYNNVGGGC).

It belongs to the class-I pyridine nucleotide-disulfide oxidoreductase family. FAD is required as a cofactor.

It localises to the cytoplasm. It catalyses the reaction NAD(+) + NADPH = NADH + NADP(+). Functionally, conversion of NADPH, generated by peripheral catabolic pathways, to NADH, which can enter the respiratory chain for energy generation. The sequence is that of Soluble pyridine nucleotide transhydrogenase from Yersinia enterocolitica serotype O:8 / biotype 1B (strain NCTC 13174 / 8081).